A 216-amino-acid polypeptide reads, in one-letter code: MKGYFVSFEGPDGAGKSTVLKEVLAEIAPQLKTQYLVTREPGGSKIAEKIRDIILDPANDKMDPKTEALLYAAARSQHVEEIIKPAINEGKVVFSDRFVDSSLAYQGQGRDLGIAKVKQINDFATDKLDPDLTFFLDIAPEIGLSRIKKLRPAQEDRLEQEDIAFHQKVYEGFLKVIKMYPDRFVVINATQPIDQVVKQVVTELKQRLPKTILENN.

10-17 provides a ligand contact to ATP; that stretch reads GPDGAGKS.

This sequence belongs to the thymidylate kinase family.

It carries out the reaction dTMP + ATP = dTDP + ADP. Phosphorylation of dTMP to form dTDP in both de novo and salvage pathways of dTTP synthesis. In Lactobacillus acidophilus (strain ATCC 700396 / NCK56 / N2 / NCFM), this protein is Thymidylate kinase.